The chain runs to 345 residues: N-acetyl-gamma-glutamyl-phosphate reductase (345 aa).

The active site involves Cys149.

It belongs to the NAGSA dehydrogenase family. Type 1 subfamily.

It is found in the cytoplasm. It carries out the reaction N-acetyl-L-glutamate 5-semialdehyde + phosphate + NADP(+) = N-acetyl-L-glutamyl 5-phosphate + NADPH + H(+). It participates in amino-acid biosynthesis; L-arginine biosynthesis; N(2)-acetyl-L-ornithine from L-glutamate: step 3/4. Its function is as follows. Catalyzes the NADPH-dependent reduction of N-acetyl-5-glutamyl phosphate to yield N-acetyl-L-glutamate 5-semialdehyde. The chain is N-acetyl-gamma-glutamyl-phosphate reductase from Marinobacter nauticus (strain ATCC 700491 / DSM 11845 / VT8) (Marinobacter aquaeolei).